The sequence spans 62 residues: Large ribosomal subunit protein uL29 (62 aa).

The protein belongs to the universal ribosomal protein uL29 family.

In Oleidesulfovibrio alaskensis (strain ATCC BAA-1058 / DSM 17464 / G20) (Desulfovibrio alaskensis), this protein is Large ribosomal subunit protein uL29.